A 494-amino-acid polypeptide reads, in one-letter code: Probable serine/threonine-protein kinase BSK3 (494 aa).

Gly-2 carries the N-myristoyl glycine lipid modification. The Protein kinase domain occupies Glu-61 to Gln-316. ATP is bound by residues His-67–Val-75 and Lys-89. The Proton acceptor role is filled by Asp-183. Phosphoserine occurs at positions 213 and 215. The TPR repeat unit spans residues Pro-423–Trp-456.

As to quaternary structure, interacts with BRI1 and BSL1. Post-translationally, phosphorylated at Ser-213 and Ser-215 by BRI1. Phosphorylation at Ser-215 is required for its function in the regulation of brassinosteroid signaling. Phosphorylation by BRI1 disrupts the interaction between its TPR and kinase domains, thereby increasing the binding between its kinase domain and BSL1.

Its subcellular location is the cell membrane. It catalyses the reaction L-seryl-[protein] + ATP = O-phospho-L-seryl-[protein] + ADP + H(+). The enzyme catalyses L-threonyl-[protein] + ATP = O-phospho-L-threonyl-[protein] + ADP + H(+). Its function is as follows. Probable serine/threonine kinase that acts as a positive regulator of brassinosteroid (BR) signaling downstream of BRI1. The sequence is that of Probable serine/threonine-protein kinase BSK3 from Oryza sativa subsp. japonica (Rice).